We begin with the raw amino-acid sequence, 366 residues long: Aminomethyltransferase (366 aa).

Belongs to the GcvT family. The glycine cleavage system is composed of four proteins: P, T, L and H.

The enzyme catalyses N(6)-[(R)-S(8)-aminomethyldihydrolipoyl]-L-lysyl-[protein] + (6S)-5,6,7,8-tetrahydrofolate = N(6)-[(R)-dihydrolipoyl]-L-lysyl-[protein] + (6R)-5,10-methylene-5,6,7,8-tetrahydrofolate + NH4(+). In terms of biological role, the glycine cleavage system catalyzes the degradation of glycine. The chain is Aminomethyltransferase from Bacillus cereus (strain ZK / E33L).